The chain runs to 277 residues: Hydroxyethylthiazole kinase (277 aa).

Residue Met55 coordinates substrate. Residues Arg130 and Ser176 each contribute to the ATP site. A substrate-binding site is contributed by Gly203.

It belongs to the Thz kinase family. The cofactor is Mg(2+).

It catalyses the reaction 5-(2-hydroxyethyl)-4-methylthiazole + ATP = 4-methyl-5-(2-phosphooxyethyl)-thiazole + ADP + H(+). The protein operates within cofactor biosynthesis; thiamine diphosphate biosynthesis; 4-methyl-5-(2-phosphoethyl)-thiazole from 5-(2-hydroxyethyl)-4-methylthiazole: step 1/1. Functionally, catalyzes the phosphorylation of the hydroxyl group of 4-methyl-5-beta-hydroxyethylthiazole (THZ). This Cutibacterium acnes (strain DSM 16379 / KPA171202) (Propionibacterium acnes) protein is Hydroxyethylthiazole kinase.